The primary structure comprises 331 residues: DNA-directed RNA polymerase subunit alpha (331 aa).

Residues 1-232 form an alpha N-terminal domain (alpha-NTD) region; it reads MQGTFRDFLK…DQLSVFVDLE (232 aa). Positions 247–331 are alpha C-terminal domain (alpha-CTD); sequence VDPILLRPID…AGLGEDRVVG (85 aa).

It belongs to the RNA polymerase alpha chain family. Homodimer. The RNAP catalytic core consists of 2 alpha, 1 beta, 1 beta' and 1 omega subunit. When a sigma factor is associated with the core the holoenzyme is formed, which can initiate transcription.

It carries out the reaction RNA(n) + a ribonucleoside 5'-triphosphate = RNA(n+1) + diphosphate. In terms of biological role, DNA-dependent RNA polymerase catalyzes the transcription of DNA into RNA using the four ribonucleoside triphosphates as substrates. The polypeptide is DNA-directed RNA polymerase subunit alpha (Alkalilimnicola ehrlichii (strain ATCC BAA-1101 / DSM 17681 / MLHE-1)).